Here is a 262-residue protein sequence, read N- to C-terminus: MAVGKNKRISKGRKGGKKKAVDPFSKKDWYDVKAPGSFTNRNVGKTLVSRTQGTKIASEGLKHRVFEVSLADLQNDEDNAYRKIRLRAEDVQGRNVLTQFWGMDFTTDKLRSLVKKWQTLIEAHVDVKTTDGYTLRMFCIAFTKRRANQVKRTCYAQSSQIRQIRRKMSEIMVKEASSCDLKELVAKFIPEAIGREIEKATQGIYPLQNVFIRKVKILKAPKFDLGKLMEVHGDYTAEDVGVKVDRPADETMVEEPTEIIGA.

Basic residues predominate over residues 1 to 18; it reads MAVGKNKRISKGRKGGKK. Residues 1–21 are disordered; the sequence is MAVGKNKRISKGRKGGKKKAV.

Belongs to the eukaryotic ribosomal protein eS1 family. Component of the small ribosomal subunit. Mature ribosomes consist of a small (40S) and a large (60S) subunit. The 40S subunit contains about 33 different proteins and 1 molecule of RNA (18S). The 60S subunit contains about 49 different proteins and 3 molecules of RNA (25S, 5.8S and 5S).

It is found in the cytoplasm. This chain is Small ribosomal subunit protein eS1y, found in Arabidopsis thaliana (Mouse-ear cress).